The sequence spans 242 residues: Mediator of RNA polymerase II transcription subunit 19-A (242 aa).

Over residues 1–15 the composition is skewed to polar residues; sequence MTEIFSTLFGQNDAQ. Disordered regions lie at residues 1–33 and 171–242; these read MTEI…PPPS and PPKK…NSLR. Positions 171–184 are enriched in basic residues; the sequence is PPKKKSKHKHRHHH. Residues 193-210 show a composition bias toward basic and acidic residues; sequence TRTDPTKKKKKKDNEPER. Positions 211–223 are enriched in basic residues; that stretch reads RKKKKDKKKKKNR. Polar residues predominate over residues 232-242; it reads TGSQPNSNSLR.

Belongs to the Mediator complex subunit 19 family. In terms of assembly, component of the Mediator complex.

It is found in the nucleus. Component of the Mediator complex, a coactivator involved in the regulated transcription of nearly all RNA polymerase II-dependent genes. Mediator functions as a bridge to convey information from gene-specific regulatory proteins to the basal RNA polymerase II transcription machinery. Mediator is recruited to promoters by direct interactions with regulatory proteins and serves as a scaffold for the assembly of a functional preinitiation complex with RNA polymerase II and the general transcription factors. This Danio rerio (Zebrafish) protein is Mediator of RNA polymerase II transcription subunit 19-A (med19a).